The sequence spans 299 residues: ATP synthase gamma chain (299 aa).

This sequence belongs to the ATPase gamma chain family. As to quaternary structure, F-type ATPases have 2 components, CF(1) - the catalytic core - and CF(0) - the membrane proton channel. CF(1) has five subunits: alpha(3), beta(3), gamma(1), delta(1), epsilon(1). CF(0) has three main subunits: a, b and c.

The protein resides in the cell membrane. Its function is as follows. Produces ATP from ADP in the presence of a proton gradient across the membrane. The gamma chain is believed to be important in regulating ATPase activity and the flow of protons through the CF(0) complex. This chain is ATP synthase gamma chain, found in Clavibacter michiganensis subsp. michiganensis (strain NCPPB 382).